A 273-amino-acid chain; its full sequence is Formamidopyrimidine-DNA glycosylase (273 aa).

Pro-2 (schiff-base intermediate with DNA) is an active-site residue. The active-site Proton donor is the Glu-3. The active-site Proton donor; for beta-elimination activity is the Lys-59. The DNA site is built by His-92 and Arg-111. The FPG-type zinc finger occupies 239-273; it reads KVYGKTGEPCVICGTPIEKIKLNGRGTHFCPHCQK. Arg-263 acts as the Proton donor; for delta-elimination activity in catalysis.

Belongs to the FPG family. In terms of assembly, monomer. Zn(2+) serves as cofactor.

The catalysed reaction is Hydrolysis of DNA containing ring-opened 7-methylguanine residues, releasing 2,6-diamino-4-hydroxy-5-(N-methyl)formamidopyrimidine.. It catalyses the reaction 2'-deoxyribonucleotide-(2'-deoxyribose 5'-phosphate)-2'-deoxyribonucleotide-DNA = a 3'-end 2'-deoxyribonucleotide-(2,3-dehydro-2,3-deoxyribose 5'-phosphate)-DNA + a 5'-end 5'-phospho-2'-deoxyribonucleoside-DNA + H(+). Its function is as follows. Involved in base excision repair of DNA damaged by oxidation or by mutagenic agents. Acts as a DNA glycosylase that recognizes and removes damaged bases. Has a preference for oxidized purines, such as 7,8-dihydro-8-oxoguanine (8-oxoG). Has AP (apurinic/apyrimidinic) lyase activity and introduces nicks in the DNA strand. Cleaves the DNA backbone by beta-delta elimination to generate a single-strand break at the site of the removed base with both 3'- and 5'-phosphates. In Listeria innocua serovar 6a (strain ATCC BAA-680 / CLIP 11262), this protein is Formamidopyrimidine-DNA glycosylase.